Reading from the N-terminus, the 39-residue chain is Cytochrome b559 subunit beta (39 aa).

Residues 14–30 form a helical membrane-spanning segment; it reads WLAVHGLAVPTVFFLGS. Position 18 (His-18) interacts with heme.

Belongs to the PsbE/PsbF family. In terms of assembly, heterodimer of an alpha subunit and a beta subunit. PSII is composed of 1 copy each of membrane proteins PsbA, PsbB, PsbC, PsbD, PsbE, PsbF, PsbH, PsbI, PsbJ, PsbK, PsbL, PsbM, PsbT, PsbX, PsbY, PsbZ, Psb30/Ycf12, at least 3 peripheral proteins of the oxygen-evolving complex and a large number of cofactors. It forms dimeric complexes. It depends on heme b as a cofactor.

The protein resides in the plastid. It is found in the chloroplast thylakoid membrane. Its function is as follows. This b-type cytochrome is tightly associated with the reaction center of photosystem II (PSII). PSII is a light-driven water:plastoquinone oxidoreductase that uses light energy to abstract electrons from H(2)O, generating O(2) and a proton gradient subsequently used for ATP formation. It consists of a core antenna complex that captures photons, and an electron transfer chain that converts photonic excitation into a charge separation. This Gnetum gnemon (Spanish joint-fir) protein is Cytochrome b559 subunit beta.